We begin with the raw amino-acid sequence, 520 residues long: ATP synthase subunit alpha 2 (520 aa).

Residue 176–183 (GDRQTGKT) coordinates ATP.

The protein belongs to the ATPase alpha/beta chains family. F-type ATPases have 2 components, CF(1) - the catalytic core - and CF(0) - the membrane proton channel. CF(1) has five subunits: alpha(3), beta(3), gamma(1), delta(1), epsilon(1). CF(0) has three main subunits: a(1), b(2) and c(9-12). The alpha and beta chains form an alternating ring which encloses part of the gamma chain. CF(1) is attached to CF(0) by a central stalk formed by the gamma and epsilon chains, while a peripheral stalk is formed by the delta and b chains.

Its subcellular location is the cell inner membrane. It catalyses the reaction ATP + H2O + 4 H(+)(in) = ADP + phosphate + 5 H(+)(out). Its function is as follows. Produces ATP from ADP in the presence of a proton gradient across the membrane. The alpha chain is a regulatory subunit. In Polaromonas naphthalenivorans (strain CJ2), this protein is ATP synthase subunit alpha 2.